The sequence spans 369 residues: Phospho-N-acetylmuramoyl-pentapeptide-transferase (369 aa).

10 helical membrane passes run 2–22, 55–75, 86–106, 122–142, 158–178, 196–216, 239–259, 266–286, 291–311, and 348–368; these read IALLIGAGLALLFALVGTPLF, TVVVFAVLLSYALTHLIMWMM, ALLLLFLMVGMGLVGFLDDFI, LVLQGAVGIIFAILALNFPNA, IPWLNLAFGGTVLGAILFVLW, LDGLAAGASVMVFGAYTLMGI, PLDLALLAAILSAALVGFLWW, IFMGDTGSLAIGGAVAGFAIL, LLLAFIGGLFVLITLSVIIQV, and ILGGLFVAAGLGIFYAEWVVL.

Belongs to the glycosyltransferase 4 family. MraY subfamily. Requires Mg(2+) as cofactor.

It localises to the cell membrane. The catalysed reaction is UDP-N-acetyl-alpha-D-muramoyl-L-alanyl-gamma-D-glutamyl-meso-2,6-diaminopimeloyl-D-alanyl-D-alanine + di-trans,octa-cis-undecaprenyl phosphate = di-trans,octa-cis-undecaprenyl diphospho-N-acetyl-alpha-D-muramoyl-L-alanyl-D-glutamyl-meso-2,6-diaminopimeloyl-D-alanyl-D-alanine + UMP. The protein operates within cell wall biogenesis; peptidoglycan biosynthesis. In terms of biological role, catalyzes the initial step of the lipid cycle reactions in the biosynthesis of the cell wall peptidoglycan: transfers peptidoglycan precursor phospho-MurNAc-pentapeptide from UDP-MurNAc-pentapeptide onto the lipid carrier undecaprenyl phosphate, yielding undecaprenyl-pyrophosphoryl-MurNAc-pentapeptide, known as lipid I. This is Phospho-N-acetylmuramoyl-pentapeptide-transferase from Arthrobacter sp. (strain FB24).